The chain runs to 1033 residues: Probable beta-glucosidase E (1033 aa).

The segment at 1 to 71 (MAPPDSTHGG…RSGSYKLRPV (71 aa)) is disordered. Topologically, residues 1–161 (MAPPDSTHGG…PVKYARIWWR (161 aa)) are cytoplasmic. Basic and acidic residues-rich tracts occupy residues 11–20 (SFRDHLKTND) and 59–71 (DLERSGSYKLRPV). The chain crosses the membrane as a helical; Signal-anchor for type II membrane protein span at residues 162–182 (TLLAVVVTLVVVVWGFLSFAV). The Extracellular portion of the chain corresponds to 183–1033 (SHREEPTVWP…SRDLPLMGEY (851 aa)). N-linked (GlcNAc...) asparagine glycans are attached at residues Asn-224, Asn-232, and Asn-418. The active site involves Asp-446. N-linked (GlcNAc...) asparagine glycosylation is found at Asn-489, Asn-528, Asn-593, Asn-909, Asn-918, and Asn-976.

The protein belongs to the glycosyl hydrolase 3 family.

It is found in the cell membrane. The enzyme catalyses Hydrolysis of terminal, non-reducing beta-D-glucosyl residues with release of beta-D-glucose.. Its pathway is glycan metabolism; cellulose degradation. Its function is as follows. Beta-glucosidases are one of a number of cellulolytic enzymes involved in the degradation of cellulosic biomass. Catalyzes the last step releasing glucose from the inhibitory cellobiose. The polypeptide is Probable beta-glucosidase E (bglE) (Aspergillus fumigatus (strain CBS 144.89 / FGSC A1163 / CEA10) (Neosartorya fumigata)).